The following is a 99-amino-acid chain: Plastocyanin (99 aa).

Residues Ala1 to Asn99 enclose the Plastocyanin-like domain. Cu cation contacts are provided by His37, Cys84, His87, and Met92.

This sequence belongs to the plastocyanin family. Requires Cu(2+) as cofactor.

It is found in the plastid. It localises to the chloroplast thylakoid membrane. Participates in electron transfer between P700 and the cytochrome b6-f complex in photosystem I. The sequence is that of Plastocyanin (PETE) from Lactuca sativa (Garden lettuce).